Reading from the N-terminus, the 640-residue chain is Serine/threonine-protein phosphatase with EF-hands 1 (640 aa).

Positions 16–45 constitute an IQ domain; that stretch reads VVRAALIIQNWYRRYRARLSARQHYALAIF. The segment at 122 to 445 is catalytic; the sequence is INLLLQAFKQ…PQFFQYQVTS (324 aa). Positions 173, 175, 202, and 234 each coordinate Mn(2+). His235 functions as the Proton donor in the catalytic mechanism. Mn(2+) is bound by residues His286 and His393. 3 EF-hand domains span residues 473–508, 556–591, and 596–631; these read ARKT…ILGL, RYRS…FNAH, and IDDS…VHKY. The Ca(2+) site is built by Asp569, Asp571, Ser573, Glu580, Asp609, Asn611, Asp613, Asn615, and Glu620.

It belongs to the PPP phosphatase family. It depends on Mn(2+) as a cofactor. Requires Mg(2+) as cofactor.

The enzyme catalyses O-phospho-L-seryl-[protein] + H2O = L-seryl-[protein] + phosphate. The catalysed reaction is O-phospho-L-threonyl-[protein] + H2O = L-threonyl-[protein] + phosphate. Its activity is regulated as follows. Activated by calcium. May have a role in the recovery or adaptation response of photoreceptors. May have a role in development. In Rattus norvegicus (Rat), this protein is Serine/threonine-protein phosphatase with EF-hands 1 (Ppef1).